The primary structure comprises 240 residues: Uridylate kinase (240 aa).

ATP is bound at residue K13–G16. Positions G21 to G26 are involved in allosteric activation by GTP. Residue G55 participates in UMP binding. The ATP site is built by G56 and R60. UMP contacts are provided by residues D75 and T136–T143. ATP-binding residues include T163, Q164, Y169, and D172.

It belongs to the UMP kinase family. As to quaternary structure, homohexamer.

Its subcellular location is the cytoplasm. It carries out the reaction UMP + ATP = UDP + ADP. It functions in the pathway pyrimidine metabolism; CTP biosynthesis via de novo pathway; UDP from UMP (UMPK route): step 1/1. Its activity is regulated as follows. Allosterically activated by GTP. Inhibited by UTP. Catalyzes the reversible phosphorylation of UMP to UDP. This chain is Uridylate kinase, found in Brucella suis biovar 1 (strain 1330).